Consider the following 188-residue polypeptide: UPF0301 protein XAC2918 (188 aa).

This sequence belongs to the UPF0301 (AlgH) family.

In Xanthomonas axonopodis pv. citri (strain 306), this protein is UPF0301 protein XAC2918.